The primary structure comprises 538 residues: Myeloid cell nuclear differentiation antigen-like protein (538 aa).

The 87-residue stretch at 1 to 87 (MAEYKKIVLL…AKKLKTEKAK (87 aa)) folds into the Pyrin domain. The disordered stretch occupies residues 120 to 306 (SYKSVPSSKK…PQPQNQNIPR (187 aa)). Basic and acidic residues-rich tracts occupy residues 135–153 (AKTE…DHLP) and 245–262 (RREE…KEPD). Positions 276–305 (SPILHSSSSASSNIPSATNQKPQPQNQNIP) are enriched in low complexity. Positions 299–499 (PQNQNIPRGA…CGDHSFVKIK (201 aa)) constitute an HIN-200 domain.

It belongs to the HIN-200 family. As to expression, highest expression observed in spleen and thymus with moderate levels in bone marrow, lung, skin and heart, low levels in muscle, liver and intestine and little or no expression in brain and pancreas.

Its subcellular location is the nucleus. Functionally, suppresses cell growth when expressed ectopically. This is Myeloid cell nuclear differentiation antigen-like protein from Mus musculus (Mouse).